The following is a 602-amino-acid chain: Ligand-dependent nuclear receptor corepressor-like protein (602 aa).

The interval P104–N124 is disordered. A compositionally biased stretch (polar residues) spans L106–N124. Residues K242, K319, K340, and K397 each participate in a glycyl lysine isopeptide (Lys-Gly) (interchain with G-Cter in SUMO2) cross-link. Disordered stretches follow at residues T495–R521 and E564–V602. Residues R516 to T568 enclose the HTH psq-type domain. A DNA-binding region (H-T-H motif) is located at residues V544–E564. The segment covering Y585–V602 has biased composition (polar residues).

It is found in the nucleus. Functionally, may act as transcription activator that binds DNA elements with the sequence 5'-CCCTATCGATCGATCTCTACCT-3'. May play a role in spermatogenesis. This chain is Ligand-dependent nuclear receptor corepressor-like protein (LCORL), found in Homo sapiens (Human).